Consider the following 210-residue polypeptide: Actin-related protein 3C (210 aa).

The signal sequence occupies residues 1 to 21 (MFESFNVPGLYIAVQAVLALA).

It belongs to the actin family. In terms of tissue distribution, expressed in kidney, stomach, spleen, bone marrow, uterus, testis, placenta, skeletal muscle, mammary gland, lung, fetal liver, and fetal kidney, but not detected in small intestine, brain, and thymus. Expressed in low-metastatic lung adenocarcinoma cells but not in high-metastatic ones.

In terms of biological role, may play a role in the suppression of metastatic potential in lung adenoma carcinoma cells. The protein is Actin-related protein 3C (ACTR3C) of Homo sapiens (Human).